Consider the following 1082-residue polypeptide: Protein argonaute 1A (1082 aa).

Disordered stretches follow at residues 17–148 (MMRK…ASQD) and 187–208 (GQSP…VRFP). A compositionally biased stretch (polar residues) spans 29–38 (GESSGTQQAT). Residues 72–100 (GRGGGQHQGRGGRYQGRGGPTSHQPGGGP) are compositionally biased toward gly residues. Residues 420–533 (PVIDFVAQLL…LPMEVCKIVE (114 aa)) form the PAZ domain. The region spanning 709 to 1030 (LLIAILPDNN…AAFRARFYME (322 aa)) is the Piwi domain. The tract at residues 1036–1065 (SGSMASGAHTRGGGPLPGARSTKPAGNVAV) is disordered.

This sequence belongs to the argonaute family. Ago subfamily.

Functionally, probably involved in the RNA silencing pathway. May bind to short RNAs such as microRNAs (miRNAs) or short interfering RNAs (siRNAs), and represses the translation of mRNAs which are complementary to them. This is Protein argonaute 1A (AGO1A) from Oryza sativa subsp. japonica (Rice).